We begin with the raw amino-acid sequence, 87 residues long: MNSLLMITACLALIGTVWAKEGYLVNHSTGCKYECFKLGDNDYCLRECRQQYGKGAGGYCYAFGCWCTHLYEQAVVWPLPKKTCNGK.

A signal peptide spans 1–19 (MNSLLMITACLALIGTVWA). In terms of domain architecture, LCN-type CS-alpha/beta spans 20–85 (KEGYLVNHST…VWPLPKKTCN (66 aa)). Intrachain disulfides connect C31–C84, C35–C60, C44–C65, and C48–C67. Asparagine amide is present on N85.

Belongs to the long (4 C-C) scorpion toxin superfamily. Sodium channel inhibitor family. Beta subfamily. Expressed by the venom gland.

Its subcellular location is the secreted. Beta toxins bind voltage-independently at site-4 of sodium channels (Nav) and shift the voltage of activation toward more negative potentials thereby affecting sodium channel activation and promoting spontaneous and repetitive firing. Is lethal to mice but does not show toxicity to freshwater shrimp and crickets. The sequence is that of Beta-toxin Ct1a from Centruroides tecomanus (Scorpion).